The chain runs to 191 residues: UPF0302 protein USA300HOU_1400 (191 aa).

This sequence belongs to the UPF0302 family.

The polypeptide is UPF0302 protein USA300HOU_1400 (Staphylococcus aureus (strain USA300 / TCH1516)).